A 201-amino-acid chain; its full sequence is uncharacterized protein (201 aa).

An N-terminal signal peptide occupies residues 1–19 (MKLIVSVFLIGCQFLNILG).

This is an uncharacterized protein from Acheta domesticus (House cricket).